Here is a 149-residue protein sequence, read N- to C-terminus: MVMGLGPLVLIFVLGLGVTPPTLAQDDSRYKHFLTQHYDAKPFGRNDRYCETMMKRRDLTSPCKDTNTFVHGNKGSIKDVCEDKNGKPYGKNFRISKSSFQVTTCKHVGGSPWPPCRYRATSGSRNIVIACENGLPVHFDESVFQQKAH.

The signal sequence occupies residues 1–24; sequence MVMGLGPLVLIFVLGLGVTPPTLA. At glutamine 25 the chain carries Pyrrolidone carboxylic acid. Histidine 37 (proton acceptor) is an active-site residue. Arginine 45 lines the tRNA pocket. Intrachain disulfides connect cysteine 50-cysteine 105, cysteine 63-cysteine 116, and cysteine 81-cysteine 131. A Nucleolar localization signal motif is present at residues 55–59; it reads KRRDL. 2 residues coordinate tRNA: cysteine 105 and isoleucine 127. Histidine 138 serves as the catalytic Proton donor.

The protein belongs to the pancreatic ribonuclease family. Homodimer. Interacts with RNH1; inhibiting ANG ribonuclease activity. Interacts with PCNA.

Its subcellular location is the secreted. It is found in the nucleus. The protein localises to the nucleolus. The protein resides in the cytoplasm. It localises to the stress granule. Has weak tRNA ribonuclease activity by itself due to partial autoinhibition by its C-terminus, which folds into a short alpha-helix that partially occludes the substrate-binding site. In absence of stress, the ribonuclease activity is inhibited by RNH1 in the cytoplasm. In response to stress, dissociates from RNH1 in the cytoplasm and associates with cytoplasmic ribosomes with vacant A-sites: ribosomes directly activate the tRNA ribonuclease activity of ANG by refolding the C-terminal alpha-helix. In response to stress, the angiogenic activity of ANG is inhibited by RNH1 in the nucleus. Its function is as follows. Secreted ribonuclease that can either promote or restrict cell proliferation of target cells, depending on the context. Endocytosed in target cells via its receptor PLXNB2 and translocates to the cytoplasm or nucleus. Under stress conditions, localizes to the cytoplasm and promotes the assembly of stress granules (SGs): specifically cleaves a subset of tRNAs within anticodon loops to produce tRNA-derived stress-induced fragments (tiRNAs), resulting in translation repression and inhibition of cell proliferation. tiRNas also prevent formation of apoptosome, thereby promoting cell survival. Preferentially cleaves RNAs between a pyrimidine and an adenosine residue, suggesting that it cleaves the anticodon loop of tRNA(Ala) (32-UUAGCAU-38) after positions 33 and 36. Cleaves a subset of tRNAs, including tRNA(Ala), tRNA(Glu), tRNA(Gly), tRNA(Lys), tRNA(Val), tRNA(His), tRNA(Asp) and tRNA(Sec). Under growth conditions and in differentiated cells, translocates to the nucleus and stimulates ribosomal RNA (rRNA) transcription, including that containing the initiation site sequences of 45S rRNA, thereby promoting cell growth and proliferation. Angiogenin induces vascularization of normal and malignant tissues via its ability to promote rRNA transcription. Involved in hematopoietic stem and progenitor cell (HSPC) growth and survival by promoting rRNA transcription in growth conditions and inhibiting translation in response to stress, respectively. Mediates the crosstalk between myeloid and intestinal epithelial cells to protect the intestinal epithelial barrier integrity: secreted by myeloid cells and promotes intestinal epithelial cells proliferation and survival. Also mediates osteoclast-endothelial cell crosstalk in growing bone: produced by osteoclasts and protects the neighboring vascular cells against senescence by promoting rRNA transcription. This Oryctolagus cuniculus (Rabbit) protein is Angiogenin (ANG).